The following is a 292-amino-acid chain: Cytidine deaminase (292 aa).

2 CMP/dCMP-type deaminase domains span residues 47-167 and 186-292; these read TTLK…FGPK and DHQD…YYSL. 88–90 serves as a coordination point for substrate; it reads NQE. H101 serves as a coordination point for Zn(2+). The active-site Proton donor is E103. The Zn(2+) site is built by C128 and C131.

The protein belongs to the cytidine and deoxycytidylate deaminase family. As to quaternary structure, homodimer. Zn(2+) serves as cofactor.

It catalyses the reaction cytidine + H2O + H(+) = uridine + NH4(+). It carries out the reaction 2'-deoxycytidine + H2O + H(+) = 2'-deoxyuridine + NH4(+). In terms of biological role, this enzyme scavenges exogenous and endogenous cytidine and 2'-deoxycytidine for UMP synthesis. The protein is Cytidine deaminase of Haemophilus influenzae (strain ATCC 51907 / DSM 11121 / KW20 / Rd).